Consider the following 1003-residue polypeptide: Leucine-rich repeat receptor-like serine/threonine-protein kinase BAM1 (1003 aa).

The first 19 residues, 1-19 (MKLFLLLLFLLHISHTFTA), serve as a signal peptide directing secretion. Topologically, residues 20 to 640 (SRPISEFRAL…HSKGPLSASM (621 aa)) are extracellular. LRR repeat units follow at residues 68 to 92 (RRHVTSLDLSGLNLSGTLSPDVSHL), 93 to 116 (RLLQNLSLAENLISGPIPPEISSL), 117 to 140 (SGLRHLNLSNNVFNGSFPDEISSG), 142 to 165 (VNLRVLDVYNNNLTGDLPVSVTNL), 166 to 191 (TQLRHLHLGGNYFAGKIPPSYGSWPV), 193 to 213 (EYLAVSGNELVGKIPPEIGNL), 215 to 238 (TLRELYIGYYNAFEDGLPPEIGNL), 239 to 262 (SELVRFDGANCGLTGEIPPEIGKL), 263 to 285 (QKLDTLFLQVNVFSGPLTWELGT), 286 to 310 (LSSLKSMDLSNNMFTGEIPASFAEL), 312 to 334 (NLTLLNLFRNKLHGEIPEFIGDL), 335 to 358 (PELEVLQLWENNFTGSIPQKLGEN), 359 to 382 (GKLNLVDLSSNKLTGTLPPNMCSG), 385 to 406 (LETLITLGNFLFGSIPDSLGKC), 407 to 430 (ESLTRIRMGENFLNGSIPKGLFGL), 432 to 454 (KLTQVELQDNYLSGELPVAGGVS), 455 to 480 (VNLGQISLSNNQLSGPLPPAIGNFTG), 482 to 502 (QKLLLDGNKFQGPIPSEVGKL), 503 to 526 (QQLSKIDFSHNLFSGRIAPEISRC), 527 to 550 (KLLTFVDLSRNELSGEIPNEITAM), 551 to 574 (KILNYLNLSRNHLVGSIPGSISSM), and 575 to 598 (QSLTSLDFSYNNLSGLVPGTGQFS). N-linked (GlcNAc...) asparagine glycosylation is found at asparagine 80, asparagine 97, asparagine 123, asparagine 130, asparagine 153, and asparagine 164. N-linked (GlcNAc...) asparagine glycosylation is found at asparagine 212 and asparagine 237. N-linked (GlcNAc...) asparagine glycans are attached at residues asparagine 312 and asparagine 346. N-linked (GlcNAc...) asparagine glycosylation occurs at asparagine 420. A glycan (N-linked (GlcNAc...) asparagine) is linked at asparagine 477. N-linked (GlcNAc...) asparagine glycans are attached at residues asparagine 557, asparagine 586, and asparagine 601. Residues 641-661 (KLLLVLGLLVCSIAFAVVAII) traverse the membrane as a helical segment. The Cytoplasmic segment spans residues 662 to 1003 (KARSLKKASE…VQSPPDLLNL (342 aa)). Threonine 686 carries the phosphothreonine modification. The Protein kinase domain occupies 694 to 971 (LKEDNIIGKG…VQILTEIPKL (278 aa)). Residues 700–708 (IGKGGAGIV) and lysine 722 contribute to the ATP site. Tyrosine 769 and tyrosine 807 each carry phosphotyrosine. Aspartate 820 acts as the Proton acceptor in catalysis. Phosphoserine is present on serine 855. A phosphotyrosine mark is found at tyrosine 863 and tyrosine 870. At threonine 871 the chain carries Phosphothreonine. Residues 969–1003 (PKLPPSKDQPMTESAPESELSPKSGVQSPPDLLNL) form a disordered region. Phosphoserine is present on serine 996.

This sequence belongs to the protein kinase superfamily. Ser/Thr protein kinase family. In terms of assembly, self-interacts and interacts with BAM2 and CLV1. Binds to the CLV3, CLE5, CLE11, CLE18, CLE19, CLE22, CLE25, CLE26, CLE40, CLE41 and CLE42 mature peptides, probably via its extracellular leucine-rich repeat region. Expressed in seedlings, roots, leaves, inflorescences, flowers and siliques.

The protein localises to the cell membrane. It carries out the reaction L-seryl-[protein] + ATP = O-phospho-L-seryl-[protein] + ADP + H(+). The catalysed reaction is L-threonyl-[protein] + ATP = O-phospho-L-threonyl-[protein] + ADP + H(+). Functionally, necessary for male gametophyte development, as well as ovule specification and function. Involved in cell-cell communication process required during early anther development, and regulating cell division and differentiation to organize cell layers. Required for the development of high-ordered vascular strands within the leaf and a correlated control of leaf shape, size and symmetry. May regulate the CLV1-dependent CLV3-mediated signaling in meristems maintenance. The chain is Leucine-rich repeat receptor-like serine/threonine-protein kinase BAM1 (BAM1) from Arabidopsis thaliana (Mouse-ear cress).